The primary structure comprises 310 residues: Coproporphyrin III ferrochelatase (310 aa).

Fe-coproporphyrin III is bound by residues Tyr13, Arg30, 46 to 47, Ser54, and Tyr125; that span reads RY. Residues His181 and Glu262 each coordinate Fe(2+).

The protein belongs to the ferrochelatase family.

It is found in the cytoplasm. The catalysed reaction is Fe-coproporphyrin III + 2 H(+) = coproporphyrin III + Fe(2+). The protein operates within porphyrin-containing compound metabolism; protoheme biosynthesis. Functionally, involved in coproporphyrin-dependent heme b biosynthesis. Catalyzes the insertion of ferrous iron into coproporphyrin III to form Fe-coproporphyrin III. In Halalkalibacterium halodurans (strain ATCC BAA-125 / DSM 18197 / FERM 7344 / JCM 9153 / C-125) (Bacillus halodurans), this protein is Coproporphyrin III ferrochelatase.